The sequence spans 413 residues: Glucose-1-phosphate adenylyltransferase (413 aa).

Residues glycine 163, glutamate 179–lysine 180, and serine 197 contribute to the alpha-D-glucose 1-phosphate site.

The protein belongs to the bacterial/plant glucose-1-phosphate adenylyltransferase family. As to quaternary structure, homotetramer.

The enzyme catalyses alpha-D-glucose 1-phosphate + ATP + H(+) = ADP-alpha-D-glucose + diphosphate. It participates in glycan biosynthesis; glycogen biosynthesis. In terms of biological role, involved in the biosynthesis of ADP-glucose, a building block required for the elongation reactions to produce glycogen. Catalyzes the reaction between ATP and alpha-D-glucose 1-phosphate (G1P) to produce pyrophosphate and ADP-Glc. This is Glucose-1-phosphate adenylyltransferase from Parafrankia sp. (strain EAN1pec).